A 426-amino-acid polypeptide reads, in one-letter code: Formyl-CoA:oxalate CoA-transferase (426 aa).

Residues 17–18 (QS), R38, 72–75 (LDTK), 96–98 (NFG), R104, and 136–139 (KVYE) contribute to the CoA site. D168 functions as the Nucleophile in the catalytic mechanism. 247 to 249 (GGQ) is a substrate binding site.

This sequence belongs to the CoA-transferase III family. Frc subfamily. In terms of assembly, homodimer.

The catalysed reaction is formyl-CoA + oxalate = oxalyl-CoA + formate. It participates in metabolic intermediate degradation; oxalate degradation; CO(2) and formate from oxalate: step 1/2. Involved in the catabolism of oxalate and in the adapatation to low pH via the induction of the oxalate-dependent acid tolerance response (ATR). Catalyzes the transfer of the CoA moiety from formyl-CoA to oxalate. The sequence is that of Formyl-CoA:oxalate CoA-transferase from Rhodopseudomonas palustris (strain BisB18).